Reading from the N-terminus, the 404-residue chain is Pectate lyase E (404 aa).

Positions 1–41 (MNNSRMSSVSTQKTTGRSALGTKSALAAIIATTMMVSVASA) are cleaved as a signal peptide. The Ca(2+) site is built by aspartate 182 and aspartate 225. Residue arginine 278 is part of the active site.

This sequence belongs to the polysaccharide lyase 1 family. PLBC subfamily. It depends on Ca(2+) as a cofactor.

Its subcellular location is the secreted. It carries out the reaction Eliminative cleavage of (1-&gt;4)-alpha-D-galacturonan to give oligosaccharides with 4-deoxy-alpha-D-galact-4-enuronosyl groups at their non-reducing ends.. The protein operates within glycan metabolism; pectin degradation; 2-dehydro-3-deoxy-D-gluconate from pectin: step 2/5. Involved in maceration and soft-rotting of plant tissue. Pectate lyases have been implicated as pathogenicity factors which induce maceration or rotting of plant tissue. PelE is sufficient to induce these effects under laboratory conditions. The chain is Pectate lyase E (pelE) from Dickeya dadantii (strain 3937) (Erwinia chrysanthemi (strain 3937)).